The sequence spans 81 residues: Sec-independent protein translocase protein TatA (81 aa).

The helical transmembrane segment at 1–21 (MGGISIWQLLIVALIVILLFG) threads the bilayer. The disordered stretch occupies residues 34–81 (GAVKGFKNAMTPEDENKSLDDKEKDQTAATSQQAAEKQPETESKDKQA). Basic and acidic residues-rich tracts occupy residues 47–59 (DENK…EKDQ) and 70–81 (KQPETESKDKQA).

This sequence belongs to the TatA/E family. As to quaternary structure, the Tat system comprises two distinct complexes: a TatABC complex, containing multiple copies of TatA, TatB and TatC subunits, and a separate TatA complex, containing only TatA subunits. Substrates initially bind to the TatABC complex, which probably triggers association of the separate TatA complex to form the active translocon.

Its subcellular location is the cell inner membrane. Part of the twin-arginine translocation (Tat) system that transports large folded proteins containing a characteristic twin-arginine motif in their signal peptide across membranes. TatA could form the protein-conducting channel of the Tat system. This is Sec-independent protein translocase protein TatA from Shewanella frigidimarina (strain NCIMB 400).